A 209-amino-acid polypeptide reads, in one-letter code: MIGLVGKKVGMTRIFTEDGVSIPVTVIEVEANRVTQVKDLANDGYRAIQVTTGAKKANRVTKPEAGHFAKAGVEAGRGLWEFRLAEGEEFTVGQSISVELFADVKKVDVTGTSKGKGFAGTVKRWNFRTQDATHGNSLSHRVPGSIGQNQTPGKVFKGKKMAGQMGNERVTVQSLDVVRVDAERNLLLVKGAVPGATGSDLIVKPAVKA.

Gln150 bears the N5-methylglutamine mark.

This sequence belongs to the universal ribosomal protein uL3 family. Part of the 50S ribosomal subunit. Forms a cluster with proteins L14 and L19. Methylated by PrmB.

One of the primary rRNA binding proteins, it binds directly near the 3'-end of the 23S rRNA, where it nucleates assembly of the 50S subunit. The sequence is that of Large ribosomal subunit protein uL3 from Escherichia coli O139:H28 (strain E24377A / ETEC).